Reading from the N-terminus, the 205-residue chain is Urease accessory protein UreG (205 aa).

Position 12–19 (glycine 12–threonine 19) interacts with GTP.

The protein belongs to the SIMIBI class G3E GTPase family. UreG subfamily. As to quaternary structure, homodimer. UreD, UreF and UreG form a complex that acts as a GTP-hydrolysis-dependent molecular chaperone, activating the urease apoprotein by helping to assemble the nickel containing metallocenter of UreC. The UreE protein probably delivers the nickel.

Its subcellular location is the cytoplasm. Its function is as follows. Facilitates the functional incorporation of the urease nickel metallocenter. This process requires GTP hydrolysis, probably effectuated by UreG. The protein is Urease accessory protein UreG of Pseudomonas savastanoi pv. phaseolicola (strain 1448A / Race 6) (Pseudomonas syringae pv. phaseolicola (strain 1448A / Race 6)).